The chain runs to 545 residues: Chaperonin GroEL (545 aa).

Residues 29 to 32 (TLGP), Lys50, 86 to 90 (DGTTT), Gly415, and Asp495 contribute to the ATP site.

This sequence belongs to the chaperonin (HSP60) family. As to quaternary structure, forms a cylinder of 14 subunits composed of two heptameric rings stacked back-to-back. Interacts with the co-chaperonin GroES.

It localises to the cytoplasm. It carries out the reaction ATP + H2O + a folded polypeptide = ADP + phosphate + an unfolded polypeptide.. Together with its co-chaperonin GroES, plays an essential role in assisting protein folding. The GroEL-GroES system forms a nano-cage that allows encapsulation of the non-native substrate proteins and provides a physical environment optimized to promote and accelerate protein folding. This is Chaperonin GroEL from Bacteroides fragilis (strain ATCC 25285 / DSM 2151 / CCUG 4856 / JCM 11019 / LMG 10263 / NCTC 9343 / Onslow / VPI 2553 / EN-2).